Consider the following 450-residue polypeptide: Putative nucleolar protein 5-3 (450 aa).

One can recognise a Nop domain in the interval Ile-252–Gly-370. Residues Ala-375 to Lys-423 form a disordered region. A compositionally biased stretch (basic and acidic residues) spans Thr-399 to Lys-423.

Belongs to the NOP5/NOP56 family.

The protein resides in the nucleus. It is found in the nucleolus. In terms of biological role, required for 60S ribosomal subunit biogenesis. The polypeptide is Putative nucleolar protein 5-3 (NOP5-3) (Arabidopsis thaliana (Mouse-ear cress)).